We begin with the raw amino-acid sequence, 265 residues long: Phosphonoacetaldehyde hydrolase (265 aa).

The Nucleophile role is filled by aspartate 9. Positions 9 and 11 each coordinate Mg(2+). The Schiff-base intermediate with substrate role is filled by lysine 50. Residue aspartate 184 participates in Mg(2+) binding.

Belongs to the HAD-like hydrolase superfamily. PhnX family. Homodimer. It depends on Mg(2+) as a cofactor.

The enzyme catalyses phosphonoacetaldehyde + H2O = acetaldehyde + phosphate + H(+). Its function is as follows. Involved in phosphonate degradation. In Lactiplantibacillus plantarum (strain ATCC BAA-793 / NCIMB 8826 / WCFS1) (Lactobacillus plantarum), this protein is Phosphonoacetaldehyde hydrolase.